A 160-amino-acid polypeptide reads, in one-letter code: S-ribosylhomocysteine lyase (160 aa).

His57, His61, and Cys127 together coordinate Fe cation.

It belongs to the LuxS family. Homodimer. Fe cation is required as a cofactor.

The enzyme catalyses S-(5-deoxy-D-ribos-5-yl)-L-homocysteine = (S)-4,5-dihydroxypentane-2,3-dione + L-homocysteine. In terms of biological role, involved in the synthesis of autoinducer 2 (AI-2) which is secreted by bacteria and is used to communicate both the cell density and the metabolic potential of the environment. The regulation of gene expression in response to changes in cell density is called quorum sensing. Catalyzes the transformation of S-ribosylhomocysteine (RHC) to homocysteine (HC) and 4,5-dihydroxy-2,3-pentadione (DPD). This chain is S-ribosylhomocysteine lyase, found in Streptococcus gordonii (strain Challis / ATCC 35105 / BCRC 15272 / CH1 / DL1 / V288).